Here is a 51-residue protein sequence, read N- to C-terminus: GECEQCFSDGGDCTTCFNNGTGPCANCLAGYPAGCSNSDCTAFLSQCYGGC.

5 disulfide bridges follow: Cys-3-Cys-24, Cys-6-Cys-16, Cys-13-Cys-47, Cys-27-Cys-40, and Cys-35-Cys-51.

The protein resides in the secreted. In terms of biological role, mating ciliate pheromones (or gamones) are diffusible extracellular communication signals that distinguish different intraspecific classes of cells commonly referred to as 'mating types'. They prepare the latter for conjugation by changing their cell surface properties. The protein is Mating pheromone Er-23 (MAT23) of Euplotes raikovi.